We begin with the raw amino-acid sequence, 422 residues long: Probable metallocarboxypeptidase A (422 aa).

The N-terminal stretch at 1 to 17 is a signal peptide; it reads MRSVLSLALLAANVVTA. The propeptide at 18–112 is activation peptide; the sequence is AVVAPFDYSG…FEAYSAGYAP (95 aa). The 301-residue stretch at 119-419 folds into the Peptidase M14 domain; the sequence is SYHSYQDHLS…AGTVAMLKAV (301 aa). The Zn(2+) site is built by His-179 and Glu-182. Substrate is bound by residues 179–182, Arg-237, and 254–255; these read HARE and NR. Cys-248 and Cys-271 form a disulfide bridge. His-309 lines the Zn(2+) pocket. 310–311 is a substrate binding site; the sequence is SY. Glu-385 acts as the Proton donor/acceptor in catalysis.

It belongs to the peptidase M14 family. Zn(2+) is required as a cofactor.

It localises to the secreted. In terms of biological role, extracellular metalloprotease that contributes to pathogenicity. The chain is Probable metallocarboxypeptidase A (MCPA) from Arthroderma benhamiae (strain ATCC MYA-4681 / CBS 112371) (Trichophyton mentagrophytes).